Reading from the N-terminus, the 86-residue chain is Testis-expressed protein 54 (86 aa).

The segment covering 1-34 has biased composition (basic and acidic residues); sequence MGCCQDKNRWASDEQARDEVTEDGREGNEVDNSG. 2 disordered regions span residues 1 to 43 and 57 to 86; these read MGCC…SNES and SRRE…PEKG.

Expressed in Testis.

In Mus musculus (Mouse), this protein is Testis-expressed protein 54.